Reading from the N-terminus, the 196-residue chain is DnaA initiator-associating protein DiaA (196 aa).

Positions 34–196 (MVQSLLNGNK…DNTLFPHQND (163 aa)) constitute an SIS domain.

Belongs to the SIS family. DiaA subfamily. As to quaternary structure, homotetramer; dimer of dimers.

Required for the timely initiation of chromosomal replication via direct interactions with the DnaA initiator protein. In Pectobacterium carotovorum subsp. carotovorum (strain PC1), this protein is DnaA initiator-associating protein DiaA.